Reading from the N-terminus, the 618-residue chain is uncharacterized protein (618 aa).

The disordered stretch occupies residues 1–45; sequence MSSKSASKLKREAKKAERLAAKGESVKPSKKNGTKNGKDKEVDGV. 2 stretches are compositionally biased toward basic and acidic residues: residues 14–27 and 36–45; these read KKAERLAAKGESVK and NGKDKEVDGV. Residues S50 and S53 each carry the phosphoserine modification. The residue at position 54 (T54) is a Phosphothreonine. S55 and S64 each carry phosphoserine. 2 ABC transporter domains span residues 76–325 and 388–609; these read IKID…LKQQ and IAFN…QSRD. ATP-binding positions include 108–115 and 423–430; these read GDNGSGKS and GKNGTGKS.

It belongs to the ABC transporter superfamily.

The protein localises to the cytoplasm. This is an uncharacterized protein from Schizosaccharomyces pombe (strain 972 / ATCC 24843) (Fission yeast).